Reading from the N-terminus, the 255-residue chain is Postacrosomal sheath WW domain-binding protein (255 aa).

One can recognise a GRAM domain in the interval 15–87 (LIPNGESLLK…DLITNLTVEQ (73 aa)). 7 consecutive repeat copies span residues 139-145 (YGAPPAG), 146-152 (YGAPPAG), 153-159 (YGAPPPG), 160-166 (YGAPPAG), 167-173 (YGAPPPG), 174-180 (YGAPPAG), and 202-208 (YGAPPLG). The 6 X 7 AA tandem repeat of Y-G-X-P-P-X-G stretch occupies residues 139–208 (YGAPPAGYGA…PAGYGAPPLG (70 aa)). The PPxY motif signature appears at 171–174 (PPGY). Disordered regions lie at residues 180 to 199 (GYGAQPAGNEGPPVGYRASP) and 204 to 255 (APPL…ASSS).

Functionally, may play a role in meiotic resumption and pronuclear formation, mediated by a WW domain-signaling pathway during fertilization. In Macaca fascicularis (Crab-eating macaque), this protein is Postacrosomal sheath WW domain-binding protein (WBP2NL).